A 174-amino-acid polypeptide reads, in one-letter code: Protein MOTHER of FT and TFL1 homolog 2 (174 aa).

This sequence belongs to the phosphatidylethanolamine-binding protein family.

Functionally, may form complexes with phosphorylated ligands by interfering with kinases and their effectors. The sequence is that of Protein MOTHER of FT and TFL1 homolog 2 from Oryza sativa subsp. japonica (Rice).